The sequence spans 469 residues: ATP synthase subunit beta (469 aa).

155–162 (GGAGVGKT) is a binding site for ATP.

It belongs to the ATPase alpha/beta chains family. In terms of assembly, F-type ATPases have 2 components, CF(1) - the catalytic core - and CF(0) - the membrane proton channel. CF(1) has five subunits: alpha(3), beta(3), gamma(1), delta(1), epsilon(1). CF(0) has three main subunits: a(1), b(2) and c(9-12). The alpha and beta chains form an alternating ring which encloses part of the gamma chain. CF(1) is attached to CF(0) by a central stalk formed by the gamma and epsilon chains, while a peripheral stalk is formed by the delta and b chains.

Its subcellular location is the cell inner membrane. It carries out the reaction ATP + H2O + 4 H(+)(in) = ADP + phosphate + 5 H(+)(out). In terms of biological role, produces ATP from ADP in the presence of a proton gradient across the membrane. The catalytic sites are hosted primarily by the beta subunits. The protein is ATP synthase subunit beta of Helicobacter pylori (strain P12).